We begin with the raw amino-acid sequence, 269 residues long: Cytochrome c oxidase subunit 3 (269 aa).

Helical transmembrane passes span 24 to 44, 46 to 66, 90 to 110, 132 to 152, 167 to 187, 207 to 227, and 247 to 267; these read FYNSLSLFILTTSGVLTMHGF, NMYIILFIAFINLVWCMTLWF, GVGLFIASEALFFLAIFWTFF, IDPFELPLLNNIILLSSGVTV, ALYGLVATILLAIVFTIFQGI, FSTGFHGFHVLIGTAFLSVGL, and ILYWHFVDVVWLILYVCIYFW.

This sequence belongs to the cytochrome c oxidase subunit 3 family. As to quaternary structure, component of the cytochrome c oxidase (complex IV, CIV), a multisubunit enzyme composed of a catalytic core of 3 subunits and several supernumerary subunits. The complex exists as a monomer or a dimer and forms supercomplexes (SCs) in the inner mitochondrial membrane with ubiquinol-cytochrome c oxidoreductase (cytochrome b-c1 complex, complex III, CIII).

It localises to the mitochondrion inner membrane. The enzyme catalyses 4 Fe(II)-[cytochrome c] + O2 + 8 H(+)(in) = 4 Fe(III)-[cytochrome c] + 2 H2O + 4 H(+)(out). In terms of biological role, component of the cytochrome c oxidase, the last enzyme in the mitochondrial electron transport chain which drives oxidative phosphorylation. The respiratory chain contains 3 multisubunit complexes succinate dehydrogenase (complex II, CII), ubiquinol-cytochrome c oxidoreductase (cytochrome b-c1 complex, complex III, CIII) and cytochrome c oxidase (complex IV, CIV), that cooperate to transfer electrons derived from NADH and succinate to molecular oxygen, creating an electrochemical gradient over the inner membrane that drives transmembrane transport and the ATP synthase. Cytochrome c oxidase is the component of the respiratory chain that catalyzes the reduction of oxygen to water. Electrons originating from reduced cytochrome c in the intermembrane space (IMS) are transferred via the dinuclear copper A center (CU(A)) of subunit 2 and heme A of subunit 1 to the active site in subunit 1, a binuclear center (BNC) formed by heme A3 and copper B (CU(B)). The BNC reduces molecular oxygen to 2 water molecules using 4 electrons from cytochrome c in the IMS and 4 protons from the mitochondrial matrix. The polypeptide is Cytochrome c oxidase subunit 3 (COXIII) (Trichophyton rubrum (Athlete's foot fungus)).